The primary structure comprises 217 residues: 3,4-dihydroxy-2-butanone 4-phosphate synthase (217 aa).

D-ribulose 5-phosphate contacts are provided by residues 37-38 (RE), Asp42, 150-154 (RRGHT), and Glu174. Residue Glu38 participates in Mg(2+) binding. Residue His153 participates in Mg(2+) binding.

It belongs to the DHBP synthase family. As to quaternary structure, homodimer. The cofactor is Mg(2+). It depends on Mn(2+) as a cofactor.

It catalyses the reaction D-ribulose 5-phosphate = (2S)-2-hydroxy-3-oxobutyl phosphate + formate + H(+). The protein operates within cofactor biosynthesis; riboflavin biosynthesis; 2-hydroxy-3-oxobutyl phosphate from D-ribulose 5-phosphate: step 1/1. Its function is as follows. Catalyzes the conversion of D-ribulose 5-phosphate to formate and 3,4-dihydroxy-2-butanone 4-phosphate. In Tolumonas auensis (strain DSM 9187 / NBRC 110442 / TA 4), this protein is 3,4-dihydroxy-2-butanone 4-phosphate synthase.